A 401-amino-acid chain; its full sequence is Exodeoxyribonuclease 7 large subunit (401 aa).

It belongs to the XseA family. Heterooligomer composed of large and small subunits.

The protein resides in the cytoplasm. It catalyses the reaction Exonucleolytic cleavage in either 5'- to 3'- or 3'- to 5'-direction to yield nucleoside 5'-phosphates.. Its function is as follows. Bidirectionally degrades single-stranded DNA into large acid-insoluble oligonucleotides, which are then degraded further into small acid-soluble oligonucleotides. In Clostridium botulinum (strain Langeland / NCTC 10281 / Type F), this protein is Exodeoxyribonuclease 7 large subunit.